Reading from the N-terminus, the 37-residue chain is Bactericidin B-3 (37 aa).

Glycine amide is present on G37.

The protein belongs to the cecropin family.

It is found in the secreted. In terms of biological role, cecropins have lytic and antibacterial activity against several Gram-positive and Gram-negative bacteria. The protein is Bactericidin B-3 of Manduca sexta (Tobacco hawkmoth).